The following is a 557-amino-acid chain: Formate--tetrahydrofolate ligase (557 aa).

Residue 66 to 73 (TPAGEGKS) coordinates ATP.

This sequence belongs to the formate--tetrahydrofolate ligase family.

The catalysed reaction is (6S)-5,6,7,8-tetrahydrofolate + formate + ATP = (6R)-10-formyltetrahydrofolate + ADP + phosphate. It functions in the pathway one-carbon metabolism; tetrahydrofolate interconversion. The sequence is that of Formate--tetrahydrofolate ligase from Clostridium botulinum (strain Kyoto / Type A2).